A 561-amino-acid polypeptide reads, in one-letter code: Arginine--tRNA ligase (561 aa).

Residues 128-138 (ANPTGPLHVGH) carry the 'HIGH' region motif.

This sequence belongs to the class-I aminoacyl-tRNA synthetase family. As to quaternary structure, monomer.

The protein resides in the cytoplasm. The catalysed reaction is tRNA(Arg) + L-arginine + ATP = L-arginyl-tRNA(Arg) + AMP + diphosphate. The chain is Arginine--tRNA ligase from Methylibium petroleiphilum (strain ATCC BAA-1232 / LMG 22953 / PM1).